The sequence spans 529 residues: UDP-glucuronosyltransferase 2B7 (529 aa).

Residues 1–23 (MSVKWTSVILLIQLSFCFSSGNC) form the signal peptide. N-linked (GlcNAc...) asparagine glycans are attached at residues asparagine 67, asparagine 68, and asparagine 315. UDP-alpha-D-glucuronate contacts are provided by residues 373-379 (THGGANG) and aspartate 398. Residues 493 to 509 (VIGFLLVCVATVIFIVT) form a helical membrane-spanning segment.

The protein belongs to the UDP-glycosyltransferase family.

It is found in the endoplasmic reticulum membrane. It carries out the reaction glucuronate acceptor + UDP-alpha-D-glucuronate = acceptor beta-D-glucuronoside + UDP + H(+). The catalysed reaction is 17alpha-estradiol + UDP-alpha-D-glucuronate = 17alpha-estradiol 17-O-(beta-D-glucuronate) + UDP + H(+). The enzyme catalyses 17beta-estradiol + UDP-alpha-D-glucuronate = 17beta-estradiol 17-O-(beta-D-glucuronate) + UDP + H(+). It catalyses the reaction 2-hydroxy-17beta-estradiol + UDP-alpha-D-glucuronate = 2-hydroxy-17beta-estradiol 3-O-(beta-D-glucuronate) + UDP + H(+). It carries out the reaction 4-hydroxy-17beta-estradiol + UDP-alpha-D-glucuronate = 17beta-estradiol 4-O-(beta-D-glucuronate) + UDP + H(+). The catalysed reaction is 4-hydroxyestrone + UDP-alpha-D-glucuronate = estrone 4-O-(beta-D-glucuronate) + UDP + H(+). The enzyme catalyses 16alpha-hydroxyestrone + UDP-alpha-D-glucuronate = 16alpha-hydroxyestrone 16-O-(beta-D-glucuronate) + UDP + H(+). It catalyses the reaction 16alpha,17beta-estriol + UDP-alpha-D-glucuronate = 16alpha,17beta-estriol 16-O-(beta-D-glucuronate) + UDP + H(+). It carries out the reaction 16beta,17beta-estriol + UDP-alpha-D-glucuronate = 16beta,17beta-estriol 16-O-(beta-D-glucuronate) + UDP + H(+). The catalysed reaction is 16alpha,17alpha-estriol + UDP-alpha-D-glucuronate = 16alpha,17alpha-estriol 16-O-(beta-D-glucuronate) + UDP + H(+). The enzyme catalyses 16alpha,17alpha-estriol + UDP-alpha-D-glucuronate = 16alpha,17alpha-estriol 17-O-(beta-D-glucuronate) + UDP + H(+). It catalyses the reaction epitestosterone + UDP-alpha-D-glucuronate = epitestosterone 17-O-(beta-D-glucuronate) + UDP + H(+). It carries out the reaction hyodeoxycholate + UDP-alpha-D-glucuronate = hyodeoxycholate 6-O-(beta-D-glucuronate) + UDP + H(+). The catalysed reaction is hyocholate + UDP-alpha-D-glucuronate = hyocholate 6-O-(beta-D-glucuronate) + UDP + H(+). The enzyme catalyses all-trans-retinoate + UDP-alpha-D-glucuronate = all-trans-retinoyl-1-O-(beta-D-glucuronate) + UDP. It catalyses the reaction all-trans-4-hydroxyretinoate + UDP-alpha-D-glucuronate = all-trans-4-hydroxy-4-O-(beta-D-glucuronide)-retinoate + UDP + H(+). It carries out the reaction (E)-ferulate + UDP-alpha-D-glucuronate = (E)-ferulic acid beta-D-glucuronate ester + UDP. The catalysed reaction is 8-iso-prostaglandin F2alpha + UDP-alpha-D-glucuronate = 8-iso-prostaglandin F2alpha-glucuronide + UDP + H(+). The enzyme catalyses 5-epi-5-F2t-IsoP + UDP-alpha-D-glucuronate = 5-epi-5-F2t-IsoP-glucuronide + UDP + H(+). It catalyses the reaction (5Z,8Z,11Z,14Z)-eicosatetraenoate + UDP-alpha-D-glucuronate = O-[(5Z),(8Z),(11Z),(14Z)-eicosatetraenoyl]-beta-D-glucuronate + UDP. It carries out the reaction 15-hydroxy-(5Z,8Z,11Z,13E)-eicosatetraenoate + UDP-alpha-D-glucuronate = 15-O-(beta-D-glucuronosyl)-(5Z,8Z,11Z,14Z)-eicosatetraenoate + UDP + H(+). The catalysed reaction is 20-hydroxy-(5Z,8Z,11Z,14Z)-eicosatetraenoate + UDP-alpha-D-glucuronate = 20-O-(beta-D-glucuronosyl)-(5Z,8Z,11Z,14Z)-eicosatetraenoate + UDP + H(+). The enzyme catalyses (E)-ferulate + UDP-alpha-D-glucuronate = (E)-4-O-(beta-D-glucuronosyl)-ferulate + UDP + H(+). It catalyses the reaction prostaglandin B1 + UDP-alpha-D-glucuronate = 15-O-(beta-D-glucuronosyl)-prostaglandin B1 + UDP + H(+). It carries out the reaction mycophenolate + UDP-alpha-D-glucuronate = mycophenolic acid O-acyl-beta-D-glucuronide + UDP. The catalysed reaction is losartan + UDP-alpha-D-glucuronate = losartan-2-N-beta-D-glucuronide + UDP. The enzyme catalyses candesartan + UDP-alpha-D-glucuronate = candesartan O-beta-D-glucuronoside + UDP. It catalyses the reaction candesartan + UDP-alpha-D-glucuronate = candesartan-2-N-beta-D-glucuronide + UDP. It carries out the reaction zolasartan + UDP-alpha-D-glucuronate = zolarsartan O-beta-D-glucuronoside + UDP. Functionally, UDP-glucuronosyltransferase (UGT) that catalyzes phase II biotransformation reactions in which lipophilic substrates are conjugated with glucuronic acid to increase the metabolite's water solubility, thereby facilitating excretion into either the urine or bile. Essential for the elimination and detoxification of drugs, xenobiotics and endogenous compounds. Catalyzes the glucuronidation of endogenous steroid hormones such as androgens (epitestosterone, androsterone) and estrogens (estradiol, epiestradiol, estriol, catechol estrogens). Also regulates the levels of retinoic acid, a major metabolite of vitamin A involved in apoptosis, cellular growth and differentiation, and embryonic development. Contributes to bile acid (BA) detoxification by catalyzing the glucuronidation of BA substrates, which are natural detergents for dietary lipids absorption. Involved in the glucuronidation of arachidonic acid (AA) and AA-derived eicosanoids including 15-HETE, 20-HETE, PGE2, PGB1 and F2-isoprostanes (8-iso-PGF2alpha and 5-epi-5-F2t-IsoP). Involved in the glucuronidation of the phytochemical ferulic acid at the phenolic or the carboxylic acid group. Involved in the glucuronidation of the AGTR1 angiotensin receptor antagonist losartan, caderastan and zolarsatan, drugs which can inhibit the effect of angiotensin II. Also metabolizes mycophenolate, an immunosuppressive agent. The chain is UDP-glucuronosyltransferase 2B7 from Homo sapiens (Human).